The sequence spans 274 residues: Major capsid protein (274 aa).

It localises to the virion. Its function is as follows. Assembles to form an icosahedral capsid. This is Major capsid protein from Staphylococcus phage phiMR11.